A 648-amino-acid chain; its full sequence is Protein teflon (648 aa).

The C2H2-type 1 zinc finger occupies 33 to 56 (LYCHFCRDLFTQLPEFLRHLQGAH). Disordered stretches follow at residues 76-127 (SGEQ…GSQN) and 146-170 (EHINDKLKPENGGFKGPRKKANSES). Residues 85 to 94 (VGHNSSSSDS) show a composition bias toward polar residues. Positions 96–107 (GLAKSEDSRATE) are enriched in basic and acidic residues. Residues 598–620 (YFCKCCDDIFTLNEDYIRHLVSQ) form a C2H2-type 2; degenerate zinc finger. A C2H2-type 3 zinc finger spans residues 624 to 647 (YQCTKCIKTFKYQGHYDKHMRTVH).

It belongs to the Teflon family.

The protein resides in the nucleus. The protein localises to the chromosome. Its function is as follows. Specifically required in males for proper segregation of autosomal bivalents at meiosis I. Expression is required in the male germ line prior to spermatocyte stage S4. May have a role as a bridging molecule maintaining adhesion to hold autosome bivalents together via heterochromatic connections. The protein is Protein teflon of Drosophila yakuba (Fruit fly).